The primary structure comprises 204 residues: ATP-dependent Clp protease proteolytic subunit 1 (204 aa).

Catalysis depends on serine 97, which acts as the Nucleophile. Histidine 122 is a catalytic residue.

This sequence belongs to the peptidase S14 family. In terms of assembly, fourteen ClpP subunits assemble into 2 heptameric rings which stack back to back to give a disk-like structure with a central cavity, resembling the structure of eukaryotic proteasomes.

The protein localises to the cytoplasm. The catalysed reaction is Hydrolysis of proteins to small peptides in the presence of ATP and magnesium. alpha-casein is the usual test substrate. In the absence of ATP, only oligopeptides shorter than five residues are hydrolyzed (such as succinyl-Leu-Tyr-|-NHMec, and Leu-Tyr-Leu-|-Tyr-Trp, in which cleavage of the -Tyr-|-Leu- and -Tyr-|-Trp bonds also occurs).. Functionally, cleaves peptides in various proteins in a process that requires ATP hydrolysis. Has a chymotrypsin-like activity. Plays a major role in the degradation of misfolded proteins. In Trichormus variabilis (strain ATCC 29413 / PCC 7937) (Anabaena variabilis), this protein is ATP-dependent Clp protease proteolytic subunit 1.